The primary structure comprises 318 residues: Methionyl-tRNA formyltransferase (318 aa).

112–115 (SILP) contacts (6S)-5,6,7,8-tetrahydrofolate.

It belongs to the Fmt family.

It carries out the reaction L-methionyl-tRNA(fMet) + (6R)-10-formyltetrahydrofolate = N-formyl-L-methionyl-tRNA(fMet) + (6S)-5,6,7,8-tetrahydrofolate + H(+). Attaches a formyl group to the free amino group of methionyl-tRNA(fMet). The formyl group appears to play a dual role in the initiator identity of N-formylmethionyl-tRNA by promoting its recognition by IF2 and preventing the misappropriation of this tRNA by the elongation apparatus. In Shewanella putrefaciens (strain CN-32 / ATCC BAA-453), this protein is Methionyl-tRNA formyltransferase.